A 764-amino-acid polypeptide reads, in one-letter code: MGGAAVLDWMVQDGVRLENCRHDHPLAVLGPQPDDQGWTVRVWMPEAQKVTLLLGSQEIVTSTPNHPWIFEASTPSDPGSNYKLRVERGGITTEQHDPWAFRHEWMGEMDRHLFAEGNHHHIWQRMGAHLTQIDGISGVMFCLWAPNALTASVLGDLNSWDGRHHPMQKRLGGIWELFVPGLDAGTLYKYEIRSQEGHCYQKADPYGFQHEVRPDNSSVVARLEGYSWSDSSWMQDRDSRNALDQPISVYEMHIGSWIHASADEPWIQPDGQPRAPVPAADMKPGARLLTYAELSDRLIPYVKERGFTHIELMPITEHPFDGSWGYQVTGWYAPTSRYGTPDEFRAFVDRCHAEGIGVIIDWVPGHFPKDAHGLAFFDGTHLYEHGDPRIGEHKEWGTLIFNYSRNEVRNFLVANLVFWFEQFHIDGIRVDAVASMLYRDYLRPDGEWLPNENGGRENTEAVRFLQQANHVLFQHYPGALSIAEESTTWPMVTQPTDMGGLGFNLKWNMGWMHDMLDYFELDPWFRQFHQNNITFSIWYTYTENFMLALSHDEVVHGKSHLLHKMPGDDWQKYANTRALLAYMWTHPGKKTIFMGMEFGQRAEWNVWGDLEWDLLNYEPHKGIQRLVDDLNVLYKAQPALWRDDFDQFGFQWIDCNDNRHSVISFMRRDSASGTWLVVVANFTPQSHANYRVGVPLEGFYEEIFNTDAAKYGGSNLGNMGGKPTDACGIHGYEHSLDLCLPPLSLVVFQHDPKRTLIESSAPSD.

Asp-431 acts as the Nucleophile in catalysis. The Proton donor role is filled by Glu-484.

This sequence belongs to the glycosyl hydrolase 13 family. GlgB subfamily. Monomer.

The enzyme catalyses Transfers a segment of a (1-&gt;4)-alpha-D-glucan chain to a primary hydroxy group in a similar glucan chain.. Its pathway is glycan biosynthesis; glycogen biosynthesis. Its function is as follows. Catalyzes the formation of the alpha-1,6-glucosidic linkages in glycogen by scission of a 1,4-alpha-linked oligosaccharide from growing alpha-1,4-glucan chains and the subsequent attachment of the oligosaccharide to the alpha-1,6 position. The protein is 1,4-alpha-glucan branching enzyme GlgB of Synechococcus sp. (strain CC9902).